The chain runs to 445 residues: Proline--tRNA ligase (445 aa).

The protein belongs to the class-II aminoacyl-tRNA synthetase family. ProS type 2 subfamily. Homodimer.

It localises to the cytoplasm. It catalyses the reaction tRNA(Pro) + L-proline + ATP = L-prolyl-tRNA(Pro) + AMP + diphosphate. Its function is as follows. Catalyzes the attachment of proline to tRNA(Pro) in a two-step reaction: proline is first activated by ATP to form Pro-AMP and then transferred to the acceptor end of tRNA(Pro). The protein is Proline--tRNA ligase of Cereibacter sphaeroides (strain ATCC 17029 / ATH 2.4.9) (Rhodobacter sphaeroides).